Consider the following 366-residue polypeptide: Chorismate synthase (366 aa).

NADP(+)-binding residues include R48 and R54. Residues 132–134 (RSS), 244–245 (NA), G289, 304–308 (KPTSS), and R330 each bind FMN.

This sequence belongs to the chorismate synthase family. In terms of assembly, homotetramer. FMNH2 is required as a cofactor.

The enzyme catalyses 5-O-(1-carboxyvinyl)-3-phosphoshikimate = chorismate + phosphate. The protein operates within metabolic intermediate biosynthesis; chorismate biosynthesis; chorismate from D-erythrose 4-phosphate and phosphoenolpyruvate: step 7/7. Its function is as follows. Catalyzes the anti-1,4-elimination of the C-3 phosphate and the C-6 proR hydrogen from 5-enolpyruvylshikimate-3-phosphate (EPSP) to yield chorismate, which is the branch point compound that serves as the starting substrate for the three terminal pathways of aromatic amino acid biosynthesis. This reaction introduces a second double bond into the aromatic ring system. This Methylorubrum extorquens (strain PA1) (Methylobacterium extorquens) protein is Chorismate synthase.